A 167-amino-acid chain; its full sequence is Signal recognition particle subunit SRP21 (167 aa).

At S2 the chain carries N-acetylserine. A compositionally biased stretch (basic and acidic residues) spans 123-139 (VEKSDPAAKKTATEPKQ). Residues 123–167 (VEKSDPAAKKTATEPKQKANAVQNNNGNSAASKKKKNKNKGKKKR) form a disordered region. Residues 154-167 (SKKKKNKNKGKKKR) are compositionally biased toward basic residues.

In terms of assembly, fungal signal recognition particle (SRP) complex consists of a 7S RNA molecule (scR1) and at least six protein subunits: SRP72, SRP68, SRP54, SEC65, SRP21 and SRP14. At least SRP14, SRP21, SRP68 and SRP72 are proposed to get assembled together with scR1 RNA as a pre-SRP complex in the nucleolus which is exported to the cytoplasm.

The protein resides in the cytoplasm. It localises to the nucleus. Its function is as follows. Signal-recognition-particle (SRP) assembly has a crucial role in targeting secretory proteins to the rough endoplasmic reticulum (ER) membrane. SRP is required for the cotranslational protein translocation for ER import and preferentially recognizes strongly hydrophobic signal sequences. It is involved in targeting the nascent chain-ribosome (RNC) complex to the ER and is proposed to participate in the arrest of nascent chain elongation during membrane targeting. The sequence is that of Signal recognition particle subunit SRP21 (SRP21) from Saccharomyces cerevisiae (strain ATCC 204508 / S288c) (Baker's yeast).